Consider the following 1262-residue polypeptide: Unconventional myosin-VI (1262 aa).

The Myosin N-terminal SH3-like domain maps to 2 to 53 (EDGKPVWAPHPTDGFQMGNIVDIGPDSLTIEPLNQKGKTFLALINQVFPAEE). Residues 57 to 771 (KDVEDNCSLM…KFAEFDQIMK (715 aa)) form the Myosin motor domain. Position 151-158 (151-158 (GESGAGKT)) interacts with ATP. The residue at position 267 (Ser-267) is a Phosphoserine. A responsible for slow ATPase activity region spans residues 273 to 317 (YLNRGCTRFFANKETDKQILQNRKSPEYVKAGSLKDPLLDDHGDF). Position 405 is a phosphothreonine (Thr-405). Phosphoserine is present on Ser-604. Actin-binding stretches follow at residues 651–673 (LNLLLDKLRSTGASFIRCIKPNL) and 665–672 (FIRCIKPN). Residues 782–810 (KRVNLWLVCSRWKKVQWCSLSVIKLKNKI) form a required for binding calmodulin region. In terms of domain architecture, IQ spans 814–834 (AEACIKMQKTIRMWLCKRRHK). Positions 835–916 (PRIDGLVKVG…EDLLSALQKK (82 aa)) are three-helix bundle. The stretch at 864–984 (KPEVNRQIKN…EDDEKRIQAE (121 aa)) forms a coiled coil. Residues 917–984 (KQQEEEAERL…EDDEKRIQAE (68 aa)) form an SAH region. The segment at 933-955 (MEKERKRREEDEERRRKEEEERR) is disordered. A Phosphoserine modification is found at Ser-1025. The interaction with TAX1BP1 and CALCOCO2/NDP52 stretch occupies residues 1034–1253 (LRRGPAVQAT…ESRQARPTYA (220 aa)). An interaction with OPTN region spans residues 1084-1086 (RRL). Ser-1123 is modified (phosphoserine). The tract at residues 1125-1253 (QQNPAAQLPA…ESRQARPTYA (129 aa)) is interaction with TOM1.

It belongs to the TRAFAC class myosin-kinesin ATPase superfamily. Myosin family. Homodimer; dimerization seems to implicate the unfolding of the three-helix bundle region creating an additional calmodulin binding site, and cargo binding. Able to function as a monomer under specific conditions in vitro. Forms a complex with CFTR and DAB2 in the apical membrane of epithelial cells. Component of the DISP/DOCK7-induced septin displacement complex, at least composed of DOCK7, LRCH3 and MYO6. Binding to calmodulin through a unique insert, not found in other myosins, located in the neck region between the motor domain and the IQ domain appears to contribute to the directionality reversal. This interaction occurs only if the C-terminal lobe of calmodulin is occupied by calcium. Interaction with F-actin/ACTN1 occurs only at the apical brush border domain of the proximal tubule cells. Interacts with DAB2. In vitro, the C-terminal globular tail binds a C-terminal region of DAB2. Interacts with CFTR. Interacts with CABP5. Interacts (via residues 1128-1256) with TOM1 (via residues 392-463). Interacts (via residues 1060-1285) with OPTN. Interacts (via residues 1060-1285) with TAX1BP1 and CALCOCO2/NDP52. Interacts with TOM1L2. Interacts with CLIC5; may work together in a complex which also includes RDX and MYO6 to stabilize linkages between the plasma membrane and subjacent actin cytoskeleton at the base of stereocilia. In terms of processing, phosphorylation in the motor domain, induced by EGF, results in translocation of MYO6 from the cell surface to membrane ruffles and affects F-actin dynamics. Phosphorylated in vitro by p21-activated kinase (PAK). In terms of tissue distribution, within the cochlea, expressed specifically within the sensory hair cells (at protein level). Expressed in the inner and outer plexiform layer of the retina (at protein level). Widely expressed. Expressed in the brain, kidney, liver, and testis.

It localises to the golgi apparatus. The protein localises to the trans-Golgi network membrane. It is found in the nucleus. Its subcellular location is the cytoplasm. The protein resides in the perinuclear region. It localises to the membrane. The protein localises to the clathrin-coated pit. It is found in the cytoplasmic vesicle. Its subcellular location is the clathrin-coated vesicle. The protein resides in the cell projection. It localises to the filopodium. The protein localises to the ruffle membrane. It is found in the microvillus. Its subcellular location is the cytosol. Myosins are actin-based motor molecules with ATPase activity. Unconventional myosins serve in intracellular movements. Myosin 6 is a reverse-direction motor protein that moves towards the minus-end of actin filaments. Has slow rate of actin-activated ADP release due to weak ATP binding. Functions in a variety of intracellular processes such as vesicular membrane trafficking and cell migration. Required for the structural integrity of the Golgi apparatus via the p53-dependent pro-survival pathway. Appears to be involved in a very early step of clathrin-mediated endocytosis in polarized epithelial cells. Together with TOM1, mediates delivery of endocytic cargo to autophagosomes thereby promoting autophagosome maturation and driving fusion with lysosomes. Links TOM1 with autophagy receptors, such as TAX1BP1; CALCOCO2/NDP52 and OPTN. May act as a regulator of F-actin dynamics. As part of the DISP complex, may regulate the association of septins with actin and thereby regulate the actin cytoskeleton. May play a role in transporting DAB2 from the plasma membrane to specific cellular targets. May play a role in the extension and network organization of neurites. Required for structural integrity of inner ear hair cells. Required for the correct localization of CLIC5 and RDX at the stereocilium base. Modulates RNA polymerase II-dependent transcription. This Mus musculus (Mouse) protein is Unconventional myosin-VI (Myo6).